The chain runs to 456 residues: Solute carrier family 38 member 6 (456 aa).

At Met1 the chain carries N-acetylmethionine. A phosphoserine mark is found at Ser4 and Ser7. The next 5 membrane-spanning stretches (helical) occupy residues 42–62 (SPGV…MGSG), 85–105 (VALL…QTAV), 111–131 (LGLF…IIIQ), 170–190 (LLII…KIGF), and 191–211 (LGYT…VVII). Cys218 and Cys238 are joined by a disulfide. Asn233 carries N-linked (GlcNAc...) asparagine glycosylation. Residues 250 to 270 (AYALPTMAFSFLCHTSILPIY) traverse the membrane as a helical segment. Residue Asn283 is glycosylated (N-linked (GlcNAc...) asparagine). The next 5 membrane-spanning stretches (helical) occupy residues 288–308 (AIAL…LTFY), 327–347 (VVVM…VPLI), 371–391 (FLIT…VPDI), 394–414 (VFGV…PGLF), and 431–451 (AFVL…LIIF).

The protein belongs to the amino acid/polyamine transporter 2 family.

The protein resides in the cell membrane. The protein localises to the synapse. The enzyme catalyses L-glutamine(out) = L-glutamine(in). It catalyses the reaction L-glutamate(out) = L-glutamate(in). Functionally, amino acid transporter with an apparent selectivity for L-glutamine and L-glutamate. May facilitate glutamine uptake in excitatory neurons. The transport mechanism remains to be elucidated. The chain is Solute carrier family 38 member 6 from Homo sapiens (Human).